We begin with the raw amino-acid sequence, 271 residues long: ATP synthase subunit a (271 aa).

The next 5 membrane-spanning stretches (helical) occupy residues 40–60 (TINI…LVLF), 100–120 (LIAP…LMDL), 146–166 (DVNV…FYSI), 220–240 (LIFI…LNVP), and 242–262 (AIFH…LTIV).

The protein belongs to the ATPase A chain family. As to quaternary structure, F-type ATPases have 2 components, CF(1) - the catalytic core - and CF(0) - the membrane proton channel. CF(1) has five subunits: alpha(3), beta(3), gamma(1), delta(1), epsilon(1). CF(0) has three main subunits: a(1), b(2) and c(9-12). The alpha and beta chains form an alternating ring which encloses part of the gamma chain. CF(1) is attached to CF(0) by a central stalk formed by the gamma and epsilon chains, while a peripheral stalk is formed by the delta and b chains.

The protein localises to the cell inner membrane. Key component of the proton channel; it plays a direct role in the translocation of protons across the membrane. The protein is ATP synthase subunit a of Shigella dysenteriae serotype 1 (strain Sd197).